The sequence spans 465 residues: Glutamate--tRNA ligase 1 (465 aa).

Positions 8-18 match the 'HIGH' region motif; it reads PSPTGLMHLGN. Positions 249-253 match the 'KMSKS' region motif; that stretch reads PLSKR. ATP is bound at residue lysine 252.

It belongs to the class-I aminoacyl-tRNA synthetase family. Glutamate--tRNA ligase type 1 subfamily. As to quaternary structure, monomer.

The protein resides in the cytoplasm. It carries out the reaction tRNA(Glu) + L-glutamate + ATP = L-glutamyl-tRNA(Glu) + AMP + diphosphate. In terms of biological role, catalyzes the attachment of glutamate to tRNA(Glu) in a two-step reaction: glutamate is first activated by ATP to form Glu-AMP and then transferred to the acceptor end of tRNA(Glu). The chain is Glutamate--tRNA ligase 1 from Coxiella burnetii (strain CbuG_Q212) (Coxiella burnetii (strain Q212)).